Reading from the N-terminus, the 1104-residue chain is MSFEGARLSMRSRRNGTLGSTRTLYSSVSRSTDVSYSESDLVNFIQANFKKRECVFFTRDSKAMESICKCGYAQSQHIEGTQINQNEKWNYKKHTKEFPTDAFGDIQFETLGKKGKYLRLSCDTDSETLYELLTQHWHLKTPNLVISVTGGAKNFALKPRMRKIFSRLIYIAQSKGAWILTGGTHYGLMKYIGEVVRDNTISRNSEENIVAIGIAAWGMVSNRDTLIRNCDDEGHFSAQYIMDDFMRDPLYILDNNHTHLLLVDNGCHGHPTVEAKLRNQLEKYISERTSQDSNYGGKIPIVCFAQGGGRETLKAINTSVKSKIPCVVVEGSGQIADVIASLVEVEDVLTSSMVKEKLVRFLPRTVSRLPEEEIESWIKWLKEILESPHLLTVIKMEEAGDEVVSSAISYALYKAFSTNEQDKDNWNGQLKLLLEWNQLDLASDEIFTNDRRWESADLQEVMFTALIKDRPKFVRLFLENGLNLQKFLTNEVLTELFSTHFSTLVYRNLQIAKNSYNDALLTFVWKLVANFRRSFWKEDRSSREDLDVELHDASLTTRHPLQALFIWAILQNKKELSKVIWEQTKGCTLAALGASKLLKTLAKVKNDINAAGESEELANEYETRAVELFTECYSSDEDLAEQLLVYSCEAWGGSNCLELAVEATDQHFIAQPGVQNFLSKQWYGEISRDTKNWKIILCLFIIPLVGCGLVSFRKKPIDKHKKLLWYYVAFFTSPFVVFSWNVVFYIAFLLLFAYVLLMDFHSVPHTPELILYALVFVLFCDEVRQWYMNGVNYFTDLWNVMDTLGLFYFIAGIVFRLHSSNKSSLYSGRVIFCLDYIIFTLRLIHIFTVSRNLGPKIIMLQRMLIDVFFFLFLFAVWMVAFGVARQGILRQNEQRWRWIFRSVIYEPYLAMFGQVPSDVDSTTYDFSHCTFSGNESKPLCVELDEYNLPRFPEWITIPLVCIYMLSTNILLVNLLVAMFGYTVGIVQENNDQVWKFQRYFLVQEYCNRLNIPFPFVVFAYFYMVVKKCFKCCCKEKNTESSACCFRNEDNETLAWEGVMKENYLVKINTKANDNAEEMRHRFRQLDTKLNDLKGLLKEIANKIK.

Residues 1–733 (MSFEGARLSM…LWYYVAFFTS (733 aa)) lie on the Cytoplasmic side of the membrane. A helical transmembrane segment spans residues 734–758 (PFVVFSWNVVFYIAFLLLFAYVLLM). Residues 759–765 (DFHSVPH) lie on the Extracellular side of the membrane. Residues 766–789 (TPELILYALVFVLFCDEVRQWYMN) form a helical membrane-spanning segment. Ca(2+)-binding residues include glutamate 782 and glutamine 785. Over 790–796 (GVNYFTD) the chain is Cytoplasmic. Residues 797–817 (LWNVMDTLGLFYFIAGIVFRL) traverse the membrane as a helical segment. Residues asparagine 799 and aspartate 802 each coordinate Ca(2+). Topologically, residues 818 to 822 (HSSNK) are extracellular. The helical transmembrane segment at 823–848 (SSLYSGRVIFCLDYIIFTLRLIHIFT) threads the bilayer. Residues 849-853 (VSRNL) lie on the Cytoplasmic side of the membrane. A helical membrane pass occupies residues 854–890 (GPKIIMLQRMLIDVFFFLFLFAVWMVAFGVARQGILR). The Extracellular portion of the chain corresponds to 891-895 (QNEQR). The segment at residues 896 to 912 (WRWIFRSVIYEPYLAMF) is an intramembrane region (pore-forming). Over 913-953 (GQVPSDVDSTTYDFSHCTFSGNESKPLCVELDEYNLPRFPE) the chain is Extracellular. A helical transmembrane segment spans residues 954-984 (WITIPLVCIYMLSTNILLVNLLVAMFGYTVG). Topologically, residues 985–1104 (IVQENNDQVW…LLKEIANKIK (120 aa)) are cytoplasmic. The stretch at 1067–1104 (INTKANDNAEEMRHRFRQLDTKLNDLKGLLKEIANKIK) forms a coiled coil.

It belongs to the transient receptor (TC 1.A.4) family. LTrpC subfamily. TRPM8 sub-subfamily. In terms of assembly, homotetramer. Interacts (via N-terminus and C-terminus domains) with TCAF1; the interaction stimulates TRPM8 channel activity. Interacts (via N-terminus and C-terminus domains) with TCAF2; the interaction inhibits TRPM8 channel activity. In terms of tissue distribution, expressed in dorsal root and trigeminal ganglia. Specifically expressed in a subset of sensory neurons, including cold-sensitive neurons in trigeminal neurons.

Its subcellular location is the cell membrane. It is found in the membrane raft. It carries out the reaction Ca(2+)(in) = Ca(2+)(out). The enzyme catalyses Na(+)(in) = Na(+)(out). The catalysed reaction is K(+)(in) = K(+)(out). With respect to regulation, activated by cold temperatures and by both natural and synthetic cooling compounds such as menthol and icilin. Activation of the channel requires the presence of PI(4,5)P2; PI(4,5)P2 is necessary to gate the channel. Activated by intracellular Ca(2+). Its function is as follows. Non-selective ion channel permeable to monovalent and divalent cations, including Na(+), K(+), and Ca(2+), with higher permeability for Ca(2+). Activated by multiple factors, such as temperature, voltage, pressure, and changes in osmolality. Activated by cool temperatures (&lt;23-28 degrees Celsius) and by chemical ligands evoking a sensation of coolness, such as menthol and icilin, therefore plays a central role in the detection of environmental cold temperatures. TRPM8 is a voltage-dependent channel; its activation by cold or chemical ligands shifts its voltage thresholds towards physiological membrane potentials, leading to the opening of the channel. In addition to its critical role in temperature sensing, regulates basal tear secretion by sensing evaporation-induced cooling and changes in osmolality. The sequence is that of Transient receptor potential cation channel subfamily M member 8 (Trpm8) from Rattus norvegicus (Rat).